The primary structure comprises 815 residues: MDSTYALHLAVATLLGASFAAASAYYMHRKTLDQLLRFARSLDRDHRRRNRHLLDADDDDDDDPPRDHDRRTTLPIPPGLPPLHTGREGKPIISPASTKRVGPLVRPTTPRSPVPTVSAFETIEDSDDDDENIAPDAKNNAVSLLTNGTIGSDPLPGKASQNGDTKPVPSTNMIRSQSATGSLHGAQHNPVAADILRKEPEHETFSRINITAVETPSPDEIEAYKVLQKCLELREKYMFREEVAPWEKEIITDPSTPKPNPNPFYYEQQTKTEHHFEMVDGVIHVYPNKDAKERIYPVADATTFFTDMHYILRVLAAGDIRTVCYKRLNLLEQKFNLHLMVNADRELLAQKAAPHRDFYNVRKVDTHVHHSACMNQKHLLRFIKSKLRKEPDEVVIFRDGTYLTLKEVFESLDLTGYDLNVDLLDVHADKSTFHRFDKFNLKYNPCGQSRLREIFLKQDNLIQGRFLAELTKEVFSDLEASKYQMAEYRISIYGRKKSEWDQMASWIVNNELYSENVVWLIQIPRIYNVYREMGTINSFQNLLDNIFLPLFEVTVDPASHPQLHVFLQQVVGLDLVDDESKPERRPTKHMPTPEQWTNVFNPAYAYYVYYCYANLYTLNKLRESKGMTTIKLRPHCGEAGDIDHLAAAFLTSHNIAHGVNLKKSPVLQYLYYLAQIGLAMSPLSNNSLFIDYHRNPFPTFFLRGLNVSLSTDDPLQIHLTKEPLVEEYSIAASLWKLSSCDLCEIARNSVYQSGFSHRLKSHWIGRNYYKRGHDGNDIHQTNVPHIRIEFRHTIWKEEMELIHLRNVDIPEEIDR.

The helical transmembrane segment at 5–27 (YALHLAVATLLGASFAAASAYYM) threads the bilayer. Disordered regions lie at residues 53–116 (LLDA…PVPT) and 144–173 (LLTN…STNM). A compositionally biased stretch (low complexity) spans 105–116 (VRPTTPRSPVPT). Residues 159–173 (ASQNGDTKPVPSTNM) are compositionally biased toward polar residues. Zn(2+)-binding residues include histidine 367 and histidine 369. Substrate-binding positions include histidine 369 and 438–443 (KFNLKY). A Zn(2+)-binding site is contributed by histidine 635. Glutamate 638 contributes to the substrate binding site. The active-site Proton acceptor is histidine 657. Position 712 (aspartate 712) interacts with Zn(2+). Residue 713–716 (DPLQ) coordinates substrate.

This sequence belongs to the metallo-dependent hydrolases superfamily. Adenosine and AMP deaminases family. As to quaternary structure, homodimer. The cofactor is Zn(2+).

The protein resides in the membrane. The enzyme catalyses AMP + H2O + H(+) = IMP + NH4(+). It functions in the pathway purine metabolism; IMP biosynthesis via salvage pathway; IMP from AMP: step 1/1. Functionally, AMP deaminase plays a critical role in energy metabolism. The chain is Probable AMP deaminase (AMPD) from Oryza sativa subsp. japonica (Rice).